The chain runs to 484 residues: MGVPRTPSRTVLFERERTGLTYRVPSLLPVPPGPTLLAFVEQRLSPDDSHAHRLVLRRGTLAGGSVRWGALHVLGTAALAEHRSMNPCPVHDAGTGTVFLFFIAVLGHTPEAVQIATGRNAARLCCVASRDAGLSWGSARDLTEEAIGGAVQDWATFAVGPGHGVQLPSGRLLVPAYTYRVDRRECFGKICRTSPHSFAFYSDDHGRTWRCGGLVPNLRSGECQLAAVDGGQAGSFLYCNARSPLGSRVQALSTDEGTSFLPAERVASLPETAWGCQGSIVGFPAPAPNRPRDDSWSVGPGSPLQPPLLGPGVHEPPEEAAVDPRGGQVPGGPFSRLQPRGDGPRQPGPRPGVSGDVGSWTLALPMPFAAPPQSPTWLLYSHPVGRRARLHMGIRLSQSPLDPRSWTEPWVIYEGPSGYSDLASIGPAPEGGLVFACLYESGARTSYDEISFCTFSLREVLENVPASPKPPNLGDKPRGCCWPS.

Residues 22–25 carry the FRIP motif motif; sequence YRVP. Substrate is bound by residues R23 and R43. Catalysis depends on proton acceptor residues D47 and D48. One copy of the BNR 1 repeat lies at 127-138; the sequence is VASRDAGLSWGS. Residues Y177 and Y179 each coordinate substrate. Residues 200–211 form a BNR 2 repeat; sequence FYSDDHGRTWRC. E222 and R242 together coordinate substrate. Residues 251-262 form a BNR 3 repeat; it reads ALSTDEGTSFLP. Residues 284-357 form a disordered region; it reads PAPAPNRPRD…GPRPGVSGDV (74 aa). Residues 336–345 show a composition bias toward low complexity; it reads RLQPRGDGPR. R389 contacts substrate. Y419 (nucleophile) is an active-site residue. Residue E440 is part of the active site.

This sequence belongs to the glycosyl hydrolase 33 family. Post-translationally, N-glycosylated. As to expression, predominant form in liver. Also expressed in brain, kidney and colon. In terms of tissue distribution, highly expressed in brain and at lower levels in kidney and liver.

Its subcellular location is the cell membrane. The protein resides in the endoplasmic reticulum membrane. It is found in the microsome membrane. It localises to the mitochondrion membrane. The protein localises to the cell projection. Its subcellular location is the neuron projection. The protein resides in the mitochondrion inner membrane. It is found in the mitochondrion outer membrane. It localises to the lysosome lumen. The catalysed reaction is Hydrolysis of alpha-(2-&gt;3)-, alpha-(2-&gt;6)-, alpha-(2-&gt;8)- glycosidic linkages of terminal sialic acid residues in oligosaccharides, glycoproteins, glycolipids, colominic acid and synthetic substrates.. It catalyses the reaction a ganglioside GM3 + H2O = a beta-D-galactosyl-(1-&gt;4)-beta-D-glucosyl-(1&lt;-&gt;1)-ceramide + N-acetylneuraminate. It carries out the reaction a ganglioside GM3 (d18:1(4E)) + H2O = a beta-D-Gal-(1-&gt;4)-beta-D-Glc-(1&lt;-&gt;1)-Cer(d18:1(4E)) + N-acetylneuraminate. The enzyme catalyses a ganglioside GM2 + H2O = a ganglioside GA2 + N-acetylneuraminate. The catalysed reaction is a ganglioside GM2 (d18:1(4E)) + H2O = a ganglioside GA2 (d18:1(4E)) + N-acetylneuraminate. It catalyses the reaction a ganglioside GD1a + H2O = a ganglioside GM1 + N-acetylneuraminate. It carries out the reaction a ganglioside GD1a (d18:1(4E)) + H2O = a ganglioside GM1 (d18:1(4E)) + N-acetylneuraminate. The enzyme catalyses a ganglioside GD3 + H2O = a ganglioside GM3 + N-acetylneuraminate. The catalysed reaction is a ganglioside GD3 (d18:1(4E)) + H2O = a ganglioside GM3 (d18:1(4E)) + N-acetylneuraminate. Functionally, exo-alpha-sialidase that catalyzes the hydrolytic cleavage of the terminal sialic acid (N-acetylneuraminic acid, Neu5Ac) of a glycan moiety in the catabolism of glycolipids, glycoproteins and oligosacharides. Efficiently hydrolyzes gangliosides including alpha-(2-&gt;3)-sialylated GD1a and GM3 and alpha-(2-&gt;8)-sialylated GD3. Hydrolyzes poly-alpha-(2-&gt;8)-sialylated neural cell adhesion molecule NCAM1 likely at growth cones, suppressing neurite outgrowth in hippocampal neurons. May desialylate sialyl Lewis A and X antigens at the cell surface, down-regulating these glycan epitopes recognized by SELE/E selectin in the initiation of cell adhesion and extravasation. Has sialidase activity toward mucin, fetuin and sialyllactose. This Homo sapiens (Human) protein is Sialidase-4 (NEU4).